The primary structure comprises 364 residues: Mannonate dehydratase (364 aa).

The protein belongs to the mannonate dehydratase family. Fe(2+) is required as a cofactor. It depends on Mn(2+) as a cofactor.

It carries out the reaction D-mannonate = 2-dehydro-3-deoxy-D-gluconate + H2O. It functions in the pathway carbohydrate metabolism; pentose and glucuronate interconversion. In terms of biological role, catalyzes the dehydration of D-mannonate. The sequence is that of Mannonate dehydratase from Streptococcus equi subsp. zooepidemicus (strain MGCS10565).